The primary structure comprises 908 residues: DNA (cytosine-5)-methyltransferase 3A (908 aa).

The span at 1-13 (MPSSGPGDTSISS) shows a compositional bias: polar residues. Disordered regions lie at residues 1 to 183 (MPSS…PMPR) and 226 to 281 (SQAS…PEYE). The span at 14–37 (LEREDDRKEGEEQEENRGKEERQE) shows a compositional bias: basic and acidic residues. The segment covering 44–54 (KVGRPGRKRKH) has biased composition (basic residues). Residues 69–80 (TTKSQPTAQDSG) are compositionally biased toward polar residues. S102 carries the post-translational modification Phosphoserine. Residues 110–124 (GAPAEGEGTETPPEA) show a composition bias toward low complexity. Residue T120 is modified to Phosphothreonine. Residue K158 forms a Glycyl lysine isopeptide (Lys-Gly) (interchain with G-Cter in SUMO2) linkage. Residue R167 is modified to Omega-N-methylarginine. Residues 195 to 399 (SKRKRDEWLA…DTGKAVEVQN (205 aa)) are interaction with DNMT1 and DNMT3B. S239 and S251 each carry phosphoserine. The segment covering 242-256 (AVQQPTDPASPTVAT) has biased composition (polar residues). A Phosphothreonine modification is found at T257. A PWWP domain is found at 257–315 (TPEPVGADAGDKNATKAADDEPEYEDGRGFGIGELVWGKLRGFSWWPGRIVSWWMTGRS). Residues 265–275 (AGDKNATKAAD) are compositionally biased toward basic and acidic residues. A phosphoserine mark is found at S386 and S389. The tract at residues 443–462 (AYAPPPPAKKPRKSTTEKPK) is disordered. The ADD domain occupies 478–610 (EVRQKCRNIE…LQMFFANNHD (133 aa)). The segment at 489–519 (ICISCGSLNVTLEHPLFIGGMCQNCKNCFLE) adopts a GATA-type; atypical zinc-finger fold. The tract at residues 490–582 (CISCGSLNVT…KEDPWNCYMC (93 aa)) is interaction with the PRC2/EED-EZH2 complex. Residues 530 to 586 (QSYCTICCGGREVLMCGNNNCCRCFCVECVDLLVGPGAAQAAIKEDPWNCYMCGHKG) form a PHD-type; atypical zinc finger. In terms of domain architecture, SAM-dependent MTase C5-type spans 630–908 (IRVLSLFDGI…APLKEYFACV (279 aa)). S-adenosyl-L-methionine-binding positions include 637-641 (DGIAT), E660, and 682-684 (DVR). The active site involves C706. At C706 the chain carries S-methylcysteine; by autocatalysis. 887–889 (RSW) lines the S-adenosyl-L-methionine pocket.

Belongs to the class I-like SAM-binding methyltransferase superfamily. C5-methyltransferase family. Heterotetramer composed of 1 DNMT3A homodimer and 2 DNMT3L subunits (DNMT3L-DNMT3A-DNMT3A-DNMT3L). Interacts with DNMT1 and DNMT3B. Interacts with MPHOSPH8. Interacts with histone H3 that is not methylated at 'Lys-4' (H3K4). Binds the ZBTB18 transcriptional repressor. Interacts with SETDB1. Associates with HDAC1 through its ADD domain. Interacts with UHRF1. Interacts with the PRC2/EED-EZH2 complex. Interacts with UBC9, PIAS1 and PIAS2. Interacts with SPOCD1. Interacts with ZNF263; recruited to the SIX3 promoter along with other proteins involved in chromatin modification and transcriptional corepression where it contributes to transcriptional repression. Post-translationally, sumoylated; sumoylation disrupts the ability to interact with histone deacetylases (HDAC1 and HDAC2) and repress transcription. Auto-methylated at Cys-706: auto-methylation takes place in absence of DNA substrate and inactivates the DNA methyltransferase activity. Inactivation by auto-methylation may be used to inactivate unused DNA methyltransferases in the cell.

It localises to the nucleus. The protein resides in the chromosome. It is found in the cytoplasm. The catalysed reaction is a 2'-deoxycytidine in DNA + S-adenosyl-L-methionine = a 5-methyl-2'-deoxycytidine in DNA + S-adenosyl-L-homocysteine + H(+). It carries out the reaction L-cysteinyl-[protein] + S-adenosyl-L-methionine = S-methyl-L-cysteinyl-[protein] + S-adenosyl-L-homocysteine + H(+). Its activity is regulated as follows. Activated by binding to the regulatory factor DNMT3L. Auto-methylation at Cys-706 in absence of DNA inactivates the DNA methyltransferase activity. Required for genome-wide de novo methylation and is essential for the establishment of DNA methylation patterns during development. DNA methylation is coordinated with methylation of histones. It modifies DNA in a non-processive manner and also methylates non-CpG sites. May preferentially methylate DNA linker between 2 nucleosomal cores and is inhibited by histone H1. Plays a role in paternal and maternal imprinting. Required for methylation of most imprinted loci in germ cells. Acts as a transcriptional corepressor for ZBTB18. Recruited to trimethylated 'Lys-36' of histone H3 (H3K36me3) sites. Can actively repress transcription through the recruitment of HDAC activity. Also has weak auto-methylation activity on Cys-706 in absence of DNA. The chain is DNA (cytosine-5)-methyltransferase 3A (Dnmt3a) from Rattus norvegicus (Rat).